A 436-amino-acid chain; its full sequence is Tryptophan synthase beta chain (436 aa).

Lysine 129 is subject to N6-(pyridoxal phosphate)lysine.

This sequence belongs to the TrpB family. Tetramer of two alpha and two beta chains. It depends on pyridoxal 5'-phosphate as a cofactor.

It carries out the reaction (1S,2R)-1-C-(indol-3-yl)glycerol 3-phosphate + L-serine = D-glyceraldehyde 3-phosphate + L-tryptophan + H2O. It functions in the pathway amino-acid biosynthesis; L-tryptophan biosynthesis; L-tryptophan from chorismate: step 5/5. Its function is as follows. The beta subunit is responsible for the synthesis of L-tryptophan from indole and L-serine. This Prochlorococcus marinus (strain MIT 9313) protein is Tryptophan synthase beta chain.